A 261-amino-acid chain; its full sequence is Indole-3-glycerol phosphate synthase (261 aa).

Belongs to the TrpC family.

The catalysed reaction is 1-(2-carboxyphenylamino)-1-deoxy-D-ribulose 5-phosphate + H(+) = (1S,2R)-1-C-(indol-3-yl)glycerol 3-phosphate + CO2 + H2O. It functions in the pathway amino-acid biosynthesis; L-tryptophan biosynthesis; L-tryptophan from chorismate: step 4/5. The sequence is that of Indole-3-glycerol phosphate synthase from Paraburkholderia phytofirmans (strain DSM 17436 / LMG 22146 / PsJN) (Burkholderia phytofirmans).